Reading from the N-terminus, the 100-residue chain is Urease subunit gamma (100 aa).

Belongs to the urease gamma subunit family. As to quaternary structure, heterotrimer of UreA (gamma), UreB (beta) and UreC (alpha) subunits. Three heterotrimers associate to form the active enzyme.

It is found in the cytoplasm. The enzyme catalyses urea + 2 H2O + H(+) = hydrogencarbonate + 2 NH4(+). It functions in the pathway nitrogen metabolism; urea degradation; CO(2) and NH(3) from urea (urease route): step 1/1. The protein is Urease subunit gamma of Parasynechococcus marenigrum (strain WH8102).